A 385-amino-acid polypeptide reads, in one-letter code: S-adenosylmethionine synthase (385 aa).

An ATP-binding site is contributed by histidine 15. Residue aspartate 17 participates in Mg(2+) binding. Position 43 (glutamate 43) interacts with K(+). 2 residues coordinate L-methionine: glutamate 56 and glutamine 99. The flexible loop stretch occupies residues glutamine 99–glutamate 109. ATP-binding positions include aspartate 164–lysine 166, arginine 230–phenylalanine 231, aspartate 239, arginine 245–lysine 246, alanine 262, and lysine 266. L-methionine is bound at residue aspartate 239. Lysine 270 is a binding site for L-methionine.

It belongs to the AdoMet synthase family. Homotetramer; dimer of dimers. Mg(2+) is required as a cofactor. It depends on K(+) as a cofactor.

Its subcellular location is the cytoplasm. The enzyme catalyses L-methionine + ATP + H2O = S-adenosyl-L-methionine + phosphate + diphosphate. It participates in amino-acid biosynthesis; S-adenosyl-L-methionine biosynthesis; S-adenosyl-L-methionine from L-methionine: step 1/1. In terms of biological role, catalyzes the formation of S-adenosylmethionine (AdoMet) from methionine and ATP. The overall synthetic reaction is composed of two sequential steps, AdoMet formation and the subsequent tripolyphosphate hydrolysis which occurs prior to release of AdoMet from the enzyme. This chain is S-adenosylmethionine synthase, found in Hydrogenovibrio crunogenus (strain DSM 25203 / XCL-2) (Thiomicrospira crunogena).